A 395-amino-acid chain; its full sequence is Nickel and cobalt resistance protein CnrB (395 aa).

The helical transmembrane segment at 13-33 threads the bilayer; that stretch reads MIAGVAAVAAAVGFGAAHLPV. Residues 35 to 55 form a disordered region; that stretch reads EKSPASTQAPEAQKPQSAPVK. Residues 37 to 50 are compositionally biased toward polar residues; sequence SPASTQAPEAQKPQ. The stretch at 140-193 forms a coiled coil; the sequence is AAERKVAQAKADLARKTYEREASLFQQGVTPRQEMEAAKAALDVAQAEALRAAT.

It belongs to the membrane fusion protein (MFP) (TC 8.A.1) family.

Its subcellular location is the cell inner membrane. Its function is as follows. The products of the genes cnrA, cnrB, and cnrC are likely to form a membrane-bound protein complex catalyzing an energy-dependent efflux of Ni(2+) and Co(2+). The mechanism of action of the CnrCBA complex may be that of a proton/cation antiporter. In Cupriavidus metallidurans (strain ATCC 43123 / DSM 2839 / NBRC 102507 / CH34) (Ralstonia metallidurans), this protein is Nickel and cobalt resistance protein CnrB (cnrB).